A 152-amino-acid chain; its full sequence is Protein NrdI (152 aa).

It belongs to the NrdI family.

Functionally, probably involved in ribonucleotide reductase function. In Mycobacterium sp. (strain JLS), this protein is Protein NrdI.